We begin with the raw amino-acid sequence, 80 residues long: MKNNYISTCIVYLMAALLLISVISIKECTADISDYGDPCSDDLKDYCIHGDCFFLKELNQPACRCYTGYYGSRCEHIDHN.

Residues 1-30 (MKNNYISTCIVYLMAALLLISVISIKECTA) form the signal peptide. Residues 35 to 75 (YGDPCSDDLKDYCIHGDCFFLKELNQPACRCYTGYYGSRCE) form the EGF-like domain. Cystine bridges form between cysteine 39–cysteine 52, cysteine 47–cysteine 63, and cysteine 65–cysteine 74.

It belongs to the EGF domain peptide family. In terms of tissue distribution, expressed by the venom gland.

The protein localises to the secreted. In terms of biological role, ant peptide with probable defensive activity which acts as a potent agonist of the mammalian epidermal growth factor receptor (EGFR) (EC(50)=6.3 nM). Mimics, both structurally and functionally, vertebrate epidermal growth factor (EGF) peptide hormones. In vivo, intraplantar injection in mice causes long-lasting (several days) hypersensitivity of the injected paw to both mechanical and thermal stimuli. Its long-lasting effect is unusual for venom toxins whose effects are usually immediate. One possible explanation is that it would reduce the duration of a nest attack, discourage future attacks, or enhance the actions of subsequent exposure to other pain-inducing venom peptides. The chain is OMEGA-myrmeciitoxin(02)-Mg1a from Myrmecia gulosa (Red bulldog ant).